We begin with the raw amino-acid sequence, 787 residues long: Endonuclease MutS2 (787 aa).

331–338 (GPNTGGKT) contributes to the ATP binding site. One can recognise a Smr domain in the interval 711-786 (IDVRGKTSDD…EQGVTIVELR (76 aa)).

Belongs to the DNA mismatch repair MutS family. MutS2 subfamily. Homodimer. Binds to stalled ribosomes, contacting rRNA.

In terms of biological role, endonuclease that is involved in the suppression of homologous recombination and thus may have a key role in the control of bacterial genetic diversity. Functionally, acts as a ribosome collision sensor, splitting the ribosome into its 2 subunits. Detects stalled/collided 70S ribosomes which it binds and splits by an ATP-hydrolysis driven conformational change. Acts upstream of the ribosome quality control system (RQC), a ribosome-associated complex that mediates the extraction of incompletely synthesized nascent chains from stalled ribosomes and their subsequent degradation. Probably generates substrates for RQC. This is Endonuclease MutS2 from Caldicellulosiruptor saccharolyticus (strain ATCC 43494 / DSM 8903 / Tp8T 6331).